The sequence spans 347 residues: Uroporphyrinogen decarboxylase (347 aa).

Substrate is bound by residues R23 to R27, D73, Y150, T205, and H323.

The protein belongs to the uroporphyrinogen decarboxylase family. In terms of assembly, homodimer.

Its subcellular location is the cytoplasm. It catalyses the reaction uroporphyrinogen III + 4 H(+) = coproporphyrinogen III + 4 CO2. The protein operates within porphyrin-containing compound metabolism; protoporphyrin-IX biosynthesis; coproporphyrinogen-III from 5-aminolevulinate: step 4/4. Catalyzes the decarboxylation of four acetate groups of uroporphyrinogen-III to yield coproporphyrinogen-III. In Ruthia magnifica subsp. Calyptogena magnifica, this protein is Uroporphyrinogen decarboxylase.